A 1334-amino-acid chain; its full sequence is Aldehyde oxidase 3 (1334 aa).

The 2Fe-2S ferredoxin-type domain maps to 8–95 (DELIFFVNGK…GAAVTTVEGI (88 aa)). [2Fe-2S] cluster-binding residues include cysteine 47, cysteine 52, cysteine 55, and cysteine 77. Glutamine 116 serves as a coordination point for Mo-molybdopterin. The [2Fe-2S] cluster site is built by cysteine 117, cysteine 120, cysteine 152, and cysteine 154. One can recognise an FAD-binding PCMH-type domain in the interval 236-421 (FRGERTTWIA…ISVFVPLSRK (186 aa)). 264–271 (LVIGNTCL) is a binding site for FAD. At serine 320 the chain carries Phosphoserine. Residues serine 354, histidine 358, aspartate 367, and leucine 411 each coordinate FAD. Mo-molybdopterin contacts are provided by glycine 801, leucine 1042, and glutamine 1198. Glutamate 1265 serves as the catalytic Proton acceptor; for azaheterocycle hydroxylase activity.

Belongs to the xanthine dehydrogenase family. Homodimer. [2Fe-2S] cluster serves as cofactor. The cofactor is FAD. It depends on Mo-molybdopterin as a cofactor.

It is found in the cytoplasm. It catalyses the reaction an aldehyde + O2 + H2O = a carboxylate + H2O2 + H(+). Oxidase with broad substrate specificity, oxidizing aromatic azaheterocycles, such as N1-methylnicotinamide and phthalazine, as well as aldehydes, such as benzaldehyde, retinal and pyridoxal. Plays a key role in the metabolism of xenobiotics and drugs containing aromatic azaheterocyclic substituents. Is probably involved in the regulation of reactive oxygen species homeostasis. Is a prominent source of superoxide generation via the one-electron reduction of molecular oxygen. Also catalyzes nitric oxide (NO) production; under anaerobic conditions, reduces nitrite to NO with NADH or aldehyde as electron donor, but under aerobic conditions, NADH is the preferred substrate. These reactions may be catalyzed by several isozymes. This chain is Aldehyde oxidase 3 (Aox3), found in Rattus norvegicus (Rat).